Reading from the N-terminus, the 641-residue chain is 1-deoxy-D-xylulose-5-phosphate synthase (641 aa).

Residues His-71 and 112–114 (SHA) each bind thiamine diphosphate. Asp-144 is a Mg(2+) binding site. Residues 145 to 146 (GA), Asn-174, Tyr-285, and Glu-366 each bind thiamine diphosphate. Asn-174 is a binding site for Mg(2+).

The protein belongs to the transketolase family. DXPS subfamily. In terms of assembly, homodimer. Mg(2+) serves as cofactor. Thiamine diphosphate is required as a cofactor.

It catalyses the reaction D-glyceraldehyde 3-phosphate + pyruvate + H(+) = 1-deoxy-D-xylulose 5-phosphate + CO2. It participates in metabolic intermediate biosynthesis; 1-deoxy-D-xylulose 5-phosphate biosynthesis; 1-deoxy-D-xylulose 5-phosphate from D-glyceraldehyde 3-phosphate and pyruvate: step 1/1. Functionally, catalyzes the acyloin condensation reaction between C atoms 2 and 3 of pyruvate and glyceraldehyde 3-phosphate to yield 1-deoxy-D-xylulose-5-phosphate (DXP). The polypeptide is 1-deoxy-D-xylulose-5-phosphate synthase (Mycobacteroides abscessus (strain ATCC 19977 / DSM 44196 / CCUG 20993 / CIP 104536 / JCM 13569 / NCTC 13031 / TMC 1543 / L948) (Mycobacterium abscessus)).